The chain runs to 390 residues: Ribonuclease D (390 aa).

Positions 7-173 (ITDSATLAAL…TLFPMLLKEL (167 aa)) constitute a 3'-5' exonuclease domain. Residues 212–293 (KADILGRLKA…ENAEALRPEE (82 aa)) form the HRDC domain.

It belongs to the RNase D family. A divalent metal cation is required as a cofactor.

It localises to the cytoplasm. The catalysed reaction is Exonucleolytic cleavage that removes extra residues from the 3'-terminus of tRNA to produce 5'-mononucleotides.. In terms of biological role, exonuclease involved in the 3' processing of various precursor tRNAs. Initiates hydrolysis at the 3'-terminus of an RNA molecule and releases 5'-mononucleotides. The sequence is that of Ribonuclease D from Zymomonas mobilis subsp. mobilis (strain ATCC 31821 / ZM4 / CP4).